The chain runs to 596 residues: Jacalin-related lectin 46 (596 aa).

Positions 1–20 are disordered; that stretch reads MTERSEALGKDGNRRWDDKS. Jacalin-type lectin domains are found at residues 2–143, 146–291, 294–439, and 446–592; these read TERS…YFTR, PTRI…YFTP, PTKS…HFYP, and AEKL…HVLP.

Belongs to the jacalin lectin family.

The sequence is that of Jacalin-related lectin 46 (JAL46) from Arabidopsis thaliana (Mouse-ear cress).